The sequence spans 663 residues: UvrABC system protein B (663 aa).

A Helicase ATP-binding domain is found at 31 to 271 (DNIEGGEKAQ…EQSISKIQAE (241 aa)). 44 to 51 (GATGTGKT) is a binding site for ATP. The Beta-hairpin signature appears at 97–120 (YYDYYQPEAYVPSSDTYIEKDSSV). Residues 435-601 (QMDDLLGEIN…TIKKDIRDLI (167 aa)) enclose the Helicase C-terminal domain. The UVR domain maps to 627-662 (QEAIKQLQKNMQEAAELLDFELAAQLRDLILELKAM).

Belongs to the UvrB family. As to quaternary structure, forms a heterotetramer with UvrA during the search for lesions. Interacts with UvrC in an incision complex.

The protein resides in the cytoplasm. Functionally, the UvrABC repair system catalyzes the recognition and processing of DNA lesions. A damage recognition complex composed of 2 UvrA and 2 UvrB subunits scans DNA for abnormalities. Upon binding of the UvrA(2)B(2) complex to a putative damaged site, the DNA wraps around one UvrB monomer. DNA wrap is dependent on ATP binding by UvrB and probably causes local melting of the DNA helix, facilitating insertion of UvrB beta-hairpin between the DNA strands. Then UvrB probes one DNA strand for the presence of a lesion. If a lesion is found the UvrA subunits dissociate and the UvrB-DNA preincision complex is formed. This complex is subsequently bound by UvrC and the second UvrB is released. If no lesion is found, the DNA wraps around the other UvrB subunit that will check the other stand for damage. This is UvrABC system protein B from Streptococcus equi subsp. equi (strain 4047).